We begin with the raw amino-acid sequence, 280 residues long: Pantothenate synthetase (280 aa).

An ATP-binding site is contributed by 31-38; sequence MGNLHVGH. Residue His38 is the Proton donor of the active site. Gln62 lines the (R)-pantoate pocket. Gln62 is a beta-alanine binding site. 150-153 is a binding site for ATP; that stretch reads GKKD. Gln156 contributes to the (R)-pantoate binding site. ATP is bound by residues Val179 and 187–190; that span reads MSSR.

The protein belongs to the pantothenate synthetase family. As to quaternary structure, homodimer.

It localises to the cytoplasm. The enzyme catalyses (R)-pantoate + beta-alanine + ATP = (R)-pantothenate + AMP + diphosphate + H(+). Its pathway is cofactor biosynthesis; (R)-pantothenate biosynthesis; (R)-pantothenate from (R)-pantoate and beta-alanine: step 1/1. Functionally, catalyzes the condensation of pantoate with beta-alanine in an ATP-dependent reaction via a pantoyl-adenylate intermediate. The chain is Pantothenate synthetase from Xanthomonas oryzae pv. oryzae (strain MAFF 311018).